Reading from the N-terminus, the 423-residue chain is Protein CLP1 homolog (423 aa).

ATP contacts are provided by residues Glu19, Lys60, and 122–127; that span reads DVGKTT.

This sequence belongs to the Clp1 family. Clp1 subfamily.

It is found in the nucleus. Functionally, required for endonucleolytic cleavage during polyadenylation-dependent pre-mRNA 3'-end formation. The chain is Protein CLP1 homolog (cbc) from Culex quinquefasciatus (Southern house mosquito).